An 839-amino-acid polypeptide reads, in one-letter code: Probable beta-glucosidase I (839 aa).

An N-linked (GlcNAc...) asparagine glycan is attached at N197. The active site involves D225. The region spanning D395–V555 is the PA14 domain. Residue N620 is glycosylated (N-linked (GlcNAc...) asparagine).

Belongs to the glycosyl hydrolase 3 family.

Its subcellular location is the secreted. The catalysed reaction is Hydrolysis of terminal, non-reducing beta-D-glucosyl residues with release of beta-D-glucose.. The protein operates within glycan metabolism; cellulose degradation. Beta-glucosidases are one of a number of cellulolytic enzymes involved in the degradation of cellulosic biomass. Catalyzes the last step releasing glucose from the inhibitory cellobiose. The sequence is that of Probable beta-glucosidase I (bglI) from Aspergillus flavus (strain ATCC 200026 / FGSC A1120 / IAM 13836 / NRRL 3357 / JCM 12722 / SRRC 167).